A 1160-amino-acid polypeptide reads, in one-letter code: Pesticidal crystal protein Cry1Db (1160 aa).

This sequence belongs to the delta endotoxin family.

Promotes colloidosmotic lysis by binding to the midgut epithelial cells of insects. The protein is Pesticidal crystal protein Cry1Db (cry1Db) of Bacillus thuringiensis.